The primary structure comprises 387 residues: Protein ERD1 homolog 2 (387 aa).

8 helical membrane passes run 20-40, 92-112, 126-146, 177-197, 217-237, 252-272, 285-305, and 326-346; these read IGLL…LIYI, AGYC…ILFL, PIYP…PFPW, FIVS…YIFG, GTFF…LQCL, LLSA…AIIH, GYLF…TFLW, and FPMF…VTWS. One can recognise an EXS domain in the interval 212–387; sequence DLKCDGTFFV…LFFHLDAISS (176 aa).

The protein belongs to the ERD1 family.

Its subcellular location is the membrane. The polypeptide is Protein ERD1 homolog 2 (Schizosaccharomyces pombe (strain 972 / ATCC 24843) (Fission yeast)).